Consider the following 550-residue polypeptide: Probable acyl-activating enzyme 9 (550 aa).

It belongs to the ATP-dependent AMP-binding enzyme family. In terms of tissue distribution, expressed in leaves, flowers and developing seeds.

Its function is as follows. May act as an acid--thiol ligase that activates carboxylic acids by forming acyl-CoAs. In Arabidopsis thaliana (Mouse-ear cress), this protein is Probable acyl-activating enzyme 9 (AEE9).